The chain runs to 301 residues: GTP cyclohydrolase FolE2 (301 aa).

It belongs to the GTP cyclohydrolase IV family.

It catalyses the reaction GTP + H2O = 7,8-dihydroneopterin 3'-triphosphate + formate + H(+). It participates in cofactor biosynthesis; 7,8-dihydroneopterin triphosphate biosynthesis; 7,8-dihydroneopterin triphosphate from GTP: step 1/1. Converts GTP to 7,8-dihydroneopterin triphosphate. The chain is GTP cyclohydrolase FolE2 from Pseudomonas syringae pv. tomato (strain ATCC BAA-871 / DC3000).